The sequence spans 366 residues: MTSTSSHSNHSALSSYGWDDSWADAFAPYAAEGLLPGRVVRVDRGQCDVVTADGVLRADTAFVTPHDPLRVVCTGDWVAVEPGGNPRYVRTYLPRRTAFVRSTSSKRSEGQILAANVDHAVVAVSLAVELDLARIERFLALAWESGAQPLVVLTKADLVPDPVTLAYLVQDVETAAPGVPVLPVSAEQGEGLDVLAAVVSGGTAVLLGQSGAGKSTLANALLGEAAMDVQAIRDVDGKGRHTTTTRNLLALPGGGVLIDTPGLRGVGLFDAGNGVDQVFAEIAELAEECRFHDCAHESEPGCAVLAAIDSGALPERRLESYRKLMRENQRIVAKTDARARAEIRKEYKRRGAIGKAAMEAKRGGLR.

Residues 107 to 266 form the CP-type G domain; it reads RSEGQILAAN…LIDTPGLRGV (160 aa). GTP contacts are provided by residues 154–157 and 208–216; these read TKAD and GQSGAGKST. Zn(2+)-binding residues include C289, C294, H296, and C302.

Belongs to the TRAFAC class YlqF/YawG GTPase family. RsgA subfamily. In terms of assembly, monomer. Associates with 30S ribosomal subunit, binds 16S rRNA. It depends on Zn(2+) as a cofactor.

It is found in the cytoplasm. One of several proteins that assist in the late maturation steps of the functional core of the 30S ribosomal subunit. Helps release RbfA from mature subunits. May play a role in the assembly of ribosomal proteins into the subunit. Circularly permuted GTPase that catalyzes slow GTP hydrolysis, GTPase activity is stimulated by the 30S ribosomal subunit. In Streptomyces coelicolor (strain ATCC BAA-471 / A3(2) / M145), this protein is Small ribosomal subunit biogenesis GTPase RsgA.